The sequence spans 208 residues: Putative thymidylate kinase (208 aa).

The tract at residues 8-15 (GIDGSGVS) is defective ATP-binding.

The protein belongs to the thymidylate kinase family.

It catalyses the reaction dTMP + ATP = dTDP + ADP. This is Putative thymidylate kinase (tmk) from Aeropyrum pernix (strain ATCC 700893 / DSM 11879 / JCM 9820 / NBRC 100138 / K1).